The primary structure comprises 240 residues: MATLFIADLHLQTEEPAITAGFLRFLQGEARQADALYILGDLFEAWIGDDDPNPLHQQIASAIKAVVDAGVPCYFIHGNRDFLVGQRFARQSGMILLAEEERLDLYGREVLIMHGDTLCTDDQGYLAFRAKVHTPWIQRLFLALPLFIRHRIAARMRADSKAANSSKSMEIMDVNPQAVVDAMERHHVQWLIHGHTHRPAVHELQANGQPAWRVVLGAWHSEGSMVKVTPDDVELIHFPF.

Residues D8, H10, D41, N79, and H114 each coordinate Mn(2+). 79 to 80 (NR) is a binding site for substrate. Residues D122, S160, N164, K167, and H195 each coordinate substrate. Residues H195 and H197 each coordinate Mn(2+).

Belongs to the LpxH family. It depends on Mn(2+) as a cofactor.

The protein localises to the cell inner membrane. It carries out the reaction UDP-2-N,3-O-bis[(3R)-3-hydroxytetradecanoyl]-alpha-D-glucosamine + H2O = 2-N,3-O-bis[(3R)-3-hydroxytetradecanoyl]-alpha-D-glucosaminyl 1-phosphate + UMP + 2 H(+). Its pathway is glycolipid biosynthesis; lipid IV(A) biosynthesis; lipid IV(A) from (3R)-3-hydroxytetradecanoyl-[acyl-carrier-protein] and UDP-N-acetyl-alpha-D-glucosamine: step 4/6. Its function is as follows. Hydrolyzes the pyrophosphate bond of UDP-2,3-diacylglucosamine to yield 2,3-diacylglucosamine 1-phosphate (lipid X) and UMP by catalyzing the attack of water at the alpha-P atom. Involved in the biosynthesis of lipid A, a phosphorylated glycolipid that anchors the lipopolysaccharide to the outer membrane of the cell. This is UDP-2,3-diacylglucosamine hydrolase from Klebsiella pneumoniae subsp. pneumoniae (strain ATCC 700721 / MGH 78578).